Consider the following 676-residue polypeptide: DNA ligase (676 aa).

Residues Asp35–Asp39, Ser84–Leu85, and Glu118 contribute to the NAD(+) site. Catalysis depends on Lys120, which acts as the N6-AMP-lysine intermediate. NAD(+) is bound by residues Arg141, Glu176, Lys284, and Lys308. Zn(2+)-binding residues include Cys402, Cys405, Cys420, and Cys426. In terms of domain architecture, BRCT spans Ser595 to Asn676.

It belongs to the NAD-dependent DNA ligase family. LigA subfamily. It depends on Mg(2+) as a cofactor. Requires Mn(2+) as cofactor.

It carries out the reaction NAD(+) + (deoxyribonucleotide)n-3'-hydroxyl + 5'-phospho-(deoxyribonucleotide)m = (deoxyribonucleotide)n+m + AMP + beta-nicotinamide D-nucleotide.. DNA ligase that catalyzes the formation of phosphodiester linkages between 5'-phosphoryl and 3'-hydroxyl groups in double-stranded DNA using NAD as a coenzyme and as the energy source for the reaction. It is essential for DNA replication and repair of damaged DNA. The protein is DNA ligase of Ehrlichia chaffeensis (strain ATCC CRL-10679 / Arkansas).